The following is a 608-amino-acid chain: Elongation factor 4 (608 aa).

Positions 11–193 (DHIRNFSIVA…AIVNRLPPPK (183 aa)) constitute a tr-type G domain. GTP contacts are provided by residues 23–28 (DHGKST) and 140–143 (NKID).

The protein belongs to the TRAFAC class translation factor GTPase superfamily. Classic translation factor GTPase family. LepA subfamily.

It is found in the cell inner membrane. It catalyses the reaction GTP + H2O = GDP + phosphate + H(+). In terms of biological role, required for accurate and efficient protein synthesis under certain stress conditions. May act as a fidelity factor of the translation reaction, by catalyzing a one-codon backward translocation of tRNAs on improperly translocated ribosomes. Back-translocation proceeds from a post-translocation (POST) complex to a pre-translocation (PRE) complex, thus giving elongation factor G a second chance to translocate the tRNAs correctly. Binds to ribosomes in a GTP-dependent manner. This Agrobacterium fabrum (strain C58 / ATCC 33970) (Agrobacterium tumefaciens (strain C58)) protein is Elongation factor 4.